We begin with the raw amino-acid sequence, 37 residues long: MSKEQIIQAIKGMTVLELNELVKSIEEEFGVSAAAPV.

Belongs to the bacterial ribosomal protein bL12 family. In terms of assembly, homodimer. Part of the ribosomal stalk of the 50S ribosomal subunit. Forms a multimeric L10(L12)X complex, where L10 forms an elongated spine to which 2 to 4 L12 dimers bind in a sequential fashion. Binds GTP-bound translation factors.

Its function is as follows. Forms part of the ribosomal stalk which helps the ribosome interact with GTP-bound translation factors. Is thus essential for accurate translation. The sequence is that of Large ribosomal subunit protein bL12 (rplL) from Clostridium pasteurianum.